The sequence spans 243 residues: UPF0502 protein RALTA_B0914 (243 aa).

A compositionally biased stretch (polar residues) spans 1 to 10; it reads MPSTPESDPT. Positions 1-23 are disordered; sequence MPSTPESDPTQPGDRPARPALRP.

The protein belongs to the UPF0502 family.

This Cupriavidus taiwanensis (strain DSM 17343 / BCRC 17206 / CCUG 44338 / CIP 107171 / LMG 19424 / R1) (Ralstonia taiwanensis (strain LMG 19424)) protein is UPF0502 protein RALTA_B0914.